The sequence spans 285 residues: Inhibitor of growth protein 5 (285 aa).

The disordered stretch occupies residues 116–225; sequence EKASSTRAKS…ATHPSDVMDM (110 aa). Over residues 131–149 the composition is skewed to basic residues; the sequence is KKGRKKTKDSKTTGKKKKS. Over residues 160 to 178 the composition is skewed to low complexity; it reads NNQSNANSSVNSSSNAGQG. The PHD-type zinc finger occupies 232-281; it reads PTYCLCHQVSYGEMIGCDNPDCPIEWFHFACVGLTTKPKGKWFCPKCTQD. 8 residues coordinate Zn(2+): cysteine 235, cysteine 237, cysteine 248, cysteine 253, histidine 259, cysteine 262, cysteine 275, and cysteine 278.

Belongs to the ING family. Component of the Enok complex composed of at least Br140, enok, Eaf6 and Ing5.

Its subcellular location is the nucleus. It is found in the chromosome. Functionally, component of the Enok complex which has a histone H3 acetyltransferase activity. This Drosophila melanogaster (Fruit fly) protein is Inhibitor of growth protein 5.